The following is a 354-amino-acid chain: Transcription termination factor 3, mitochondrial (354 aa).

The transit peptide at 1-89 (MFCSALRNIL…SFNLAAYVNN (89 aa)) directs the protein to the mitochondrion.

This sequence belongs to the mTERF family.

It is found in the mitochondrion. Its function is as follows. Binds promoter DNA and regulates initiation of transcription. Regulator of mitochondrial ribosome biogenesis and translation that is essential for development. Required for normal mitochondrial transcription and translation. Required for assembly of mitochondrial respiratory complexes and normal mitochondrial function. Maintains 16S rRNA levels and functions in mitochondrial ribosome assembly by regulating the biogenesis of the 39S ribosomal subunit. In Drosophila melanogaster (Fruit fly), this protein is Transcription termination factor 3, mitochondrial.